A 202-amino-acid polypeptide reads, in one-letter code: Small ribosomal subunit protein uS4 (202 aa).

The disordered stretch occupies residues 15–42 (LGDLPGLTRKAAKRSYPPGQHGQARRKR). The 63-residue stretch at 90–152 (NRLDNVCFRL…KCSKQLAEGN (63 aa)) folds into the S4 RNA-binding domain.

Belongs to the universal ribosomal protein uS4 family. In terms of assembly, part of the 30S ribosomal subunit. Contacts protein S5. The interaction surface between S4 and S5 is involved in control of translational fidelity.

One of the primary rRNA binding proteins, it binds directly to 16S rRNA where it nucleates assembly of the body of the 30S subunit. Functionally, with S5 and S12 plays an important role in translational accuracy. This is Small ribosomal subunit protein uS4 from Synechococcus sp. (strain WH7803).